The sequence spans 160 residues: Cytochrome b6-f complex subunit 4 (160 aa).

Transmembrane regions (helical) follow at residues Leu-36 to Val-56, Leu-95 to Glu-115, and Leu-131 to Ile-151.

This sequence belongs to the cytochrome b family. PetD subfamily. In terms of assembly, the 4 large subunits of the cytochrome b6-f complex are cytochrome b6, subunit IV (17 kDa polypeptide, petD), cytochrome f and the Rieske protein, while the 4 small subunits are petG, petL, petM and petN. The complex functions as a dimer.

The protein resides in the plastid. The protein localises to the chloroplast thylakoid membrane. Its function is as follows. Component of the cytochrome b6-f complex, which mediates electron transfer between photosystem II (PSII) and photosystem I (PSI), cyclic electron flow around PSI, and state transitions. This Phaeodactylum tricornutum (strain CCAP 1055/1) protein is Cytochrome b6-f complex subunit 4.